The following is a 596-amino-acid chain: Endoribonuclease ZC3H12A (596 aa).

Disordered stretches follow at residues 1-48 and 97-134; these read MSDP…TSEL and QALT…EGSD. Residues 10–19 show a composition bias toward polar residues; it reads VQESNPTMSL. Residues 42–87 are ubiquitin association domain; sequence EAPTSELQMKVDFFRKLGYSSSEIHSVLQKLGVQADTNTVLGELVK. Residues 81 to 150 form a necessary for interaction with TANK region; that stretch reads VLGELVKHGS…DGSNVAMSHG (70 aa). The tract at residues 112–281 is RNase; the sequence is GGSTPKPSTL…DKFMPPDDPL (170 aa). An RNase NYN domain is found at 135 to 290; sequence LRPVVIDGSN…LGRHGPSLDN (156 aa). The interval 214–220 is RNA binding; the sequence is RRVGGKR. Asp226 serves as a coordination point for Mg(2+). 2 disordered regions span residues 278-306 and 340-417; these read DDPL…KQPC and NALL…PTEW. The C3H1-type zinc finger occupies 301 to 324; that stretch reads HRKQPCPYGKKCTYGIKCRFFHPE. Residues 301–454 form a necessary for interaction with ZC3H12D region; sequence HRKQPCPYGK…SELWGVRGGS (154 aa). Ser344 is modified (phosphoserine). Residues 356–368 show a composition bias toward low complexity; the sequence is QRPSPASQSSSVS. 2 positions are modified to phosphoserine: Ser435 and Ser439. Residues 511–543 form a disordered region; that stretch reads YWSEPYPLPPPTPVLQEPQRPSPGAGGGPWGRV. Over residues 524 to 533 the composition is skewed to low complexity; sequence VLQEPQRPSP.

Belongs to the ZC3H12 family. Oligomer. Found in a deubiquitination complex with TANK, USP10 and ZC3H12A; this complex inhibits genotoxic stress- or interleukin-1-beta-mediated NF-kappaB activation by promoting IKBKG or TRAF6 deubiquitination. Interacts with IKBKG; this interaction increases in response to DNA damage. Interacts with TANK; this interaction increases in response to DNA damage and serves as a bridge to anchor both TANK and USP10 into a deubiquitinating complex. Interacts with TRAF6; this interaction increases in response to DNA damage and is stimulated by TANK. Interacts with USP10; this interaction increases in response to DNA damage and serves as a bridge to anchor both TANK and USP10 into a deubiquitinating complex. Interacts with ZC3H12D. Interacts with TNRC6A. Interacts with IKBKB/IKKB. Interacts with IKBKB/IKKB. Interacts with IKBKB/IKKB. Interacts with BTRC; the interaction occurs when ZC3H12A is phosphorylated in a IKBKB/IKKB-dependent manner. Interacts with IRAK1; this interaction increases the interaction between ZC3H12A and IKBKB/IKKB. Interacts with UPF1; this interaction occurs in a mRNA translationally active- and termination-dependent manner and is essential for ZC3H12A-mediated degradation of target mRNAs. Associates with ribosomes. Interacts with ubiquitin. Mg(2+) serves as cofactor. In terms of processing, proteolytically cleaved between Arg-111 and Arg-214 by MALT1 in activated T-cells; cleavage at Arg-111 is critical for promoting ZC3H12A degradation in response to T-cell receptor (TCR) stimulation, and hence is necessary for prolonging the stability of a set of mRNAs controlling T-cell activation and Th17 cell differentiation. Post-translationally, phosphorylated by IRAK1; phosphorylation is necessary for subsequent phosphorylation by the I-kappa-B-kinase (IKK) complex. Phosphorylated by I-kappa-B-kinases (IKKs) at Ser-435 and Ser-439 upon lipopolysaccharide (LPS) or IL1B stimulation in macrophages through the MyD88-dependent signaling pathway; these phosphorylations promote rapid ubiquitin proteasome-mediated degradation of ZC3H12A in macrophages and hence allows its target mRNAs, such as IL6, to escape from degradation and accumulate during the inflammatory response. Ubiquitinated; ubiquitination is induced in response to interleukin IL1 receptor stimuli in a IKBKB/IKKB and IRAK1-dependent manner, leading to proteasome-mediated degradation. As to expression, expressed in CD4(+) helper T-cells (at protein level). Highly expressed in macrophages. Expressed in lung, lymph nodes, spleen and thymus. Expressed weakly in heart. Expressed weakly in cardiomyocytes (at protein level). Expressed in spleen, lung, intestine, brown adipose tissue and thymus. Weakly expressed in the heart. Weakly expressed in cardiomyocytes.

It localises to the nucleus. It is found in the cytoplasm. The protein localises to the rough endoplasmic reticulum membrane. Its subcellular location is the cytoplasmic granule. The protein resides in the P-body. Its function is as follows. Endoribonuclease involved in various biological functions such as cellular inflammatory response and immune homeostasis, glial differentiation of neuroprogenitor cells, cell death of cardiomyocytes, adipogenesis and angiogenesis. Functions as an endoribonuclease involved in mRNA decay. Modulates the inflammatory response by promoting the degradation of a set of translationally active cytokine-induced inflammation-related mRNAs, such as IL6 and IL12B, during the early phase of inflammation. Prevents aberrant T-cell-mediated immune reaction by degradation of multiple mRNAs controlling T-cell activation, such as those encoding cytokines (IL6 and IL2), cell surface receptors (ICOS, TNFRSF4 and TNFR2) and transcription factor (REL). Inhibits cooperatively with ZC3H12A the differentiation of helper T cells Th17 in lungs. They repress target mRNA encoding the Th17 cell-promoting factors IL6, ICOS, REL, IRF4, NFKBID and NFKBIZ. The cooperation requires RNA-binding by RC3H1 and the nuclease activity of ZC3H12A. Together with RC3H1, destabilizes TNFRSF4/OX40 mRNA by binding to the conserved stem loop structure in its 3'UTR. Self regulates by destabilizing its own mRNA. Cleaves mRNA harboring a stem-loop (SL), often located in their 3'-UTRs, during the early phase of inflammation in a helicase UPF1-dependent manner. Plays a role in the inhibition of microRNAs (miRNAs) biogenesis. Cleaves the terminal loop of a set of precursor miRNAs (pre-miRNAs) important for the regulation of the inflammatory response leading to their degradation, and thus preventing the biosynthesis of mature miRNAs. Also plays a role in promoting angiogenesis in response to inflammatory cytokines by inhibiting the production of antiangiogenic microRNAs via its anti-dicer RNase activity. Affects the overall ubiquitination of cellular proteins. Positively regulates deubiquitinase activity promoting the cleavage at 'Lys-48'- and 'Lys-63'-linked polyubiquitin chains on TNF receptor-associated factors (TRAFs), preventing JNK and NF-kappa-B signaling pathway activation, and hence negatively regulating macrophage-mediated inflammatory response and immune homeostasis. Induces also deubiquitination of the transcription factor HIF1A, probably leading to its stabilization and nuclear import, thereby positively regulating the expression of proangiogenic HIF1A-targeted genes. Involved in a TANK-dependent negative feedback response to attenuate NF-kappaB activation through the deubiquitination of IKBKG or TRAF6 in response to interleukin-1-beta (IL1B) stimulation or upon DNA damage. Prevents stress granules (SGs) formation and promotes macrophage apoptosis under stress conditions, including arsenite-induced oxidative stress, heat shock, and energy deprivation. Plays a role in the regulation of macrophage polarization; promotes IL4-induced polarization of macrophages M1 into anti-inflammatory M2 state. May also act as a transcription factor that regulates the expression of multiple genes involved in inflammatory response, angiogenesis, adipogenesis and apoptosis. Functions as a positive regulator of glial differentiation of neuroprogenitor cells through an amyloid precursor protein (APP)-dependent signaling pathway. Attenuates septic myocardial contractile dysfunction in response to lipopolysaccharide (LPS) by reducing I-kappa-B-kinase (IKK)-mediated NF-kappa-B activation, and hence myocardial pro-inflammatory cytokine production. The sequence is that of Endoribonuclease ZC3H12A from Mus musculus (Mouse).